The chain runs to 346 residues: MTDYQSKYSLYKRKYLSLKQKQNGGNNTADNTADNIDPIVKKFVDSIKDAKPVYEVTPEEARKNLNSIQSDQSYKTTVDMENVVVNDKNVNATIIRPKGNRDRLPVVFYVHGAGWVMGGLQTHGRFVSEIVNKANVTVIFVNYSLAPEKKFPTQIVECYDALVYFYSNAQRYNLDFNNIIVVGDSVGGNMATVLAMLTREKTGPRFKYQILLYPVISAAMNTQSYQTFENGPWLSKKSMEWFYEQYTEPNQNLMIPSISPINATDRSIQYLPPTLLVVDENDVLRDEGEAYAHRLSNLGVPTKSVRVLGTIHDFMLLNPLVKSPATKLTLEIVVNEIKRITTPNKN.

Belongs to the AB hydrolase 3 family.

Its subcellular location is the virion. This Acanthamoeba polyphaga mimivirus (APMV) protein is Putative alpha/beta hydrolase R526.